A 157-amino-acid chain; its full sequence is Protein Smg (157 aa).

The protein belongs to the Smg family.

The protein is Protein Smg of Buchnera aphidicola subsp. Schizaphis graminum (strain Sg).